Reading from the N-terminus, the 103-residue chain is UPF0145 protein PBPRB0184 (103 aa).

The protein belongs to the UPF0145 family.

The protein is UPF0145 protein PBPRB0184 of Photobacterium profundum (strain SS9).